The chain runs to 264 residues: Glutamate racemase (264 aa).

Substrate-binding positions include 10–11 (DS) and 42–43 (YG). Cys-73 acts as the Proton donor/acceptor in catalysis. Residue 74 to 75 (NT) coordinates substrate. The Proton donor/acceptor role is filled by Cys-183. 184–185 (TH) serves as a coordination point for substrate.

It belongs to the aspartate/glutamate racemases family.

It catalyses the reaction L-glutamate = D-glutamate. It functions in the pathway cell wall biogenesis; peptidoglycan biosynthesis. Functionally, provides the (R)-glutamate required for cell wall biosynthesis. The chain is Glutamate racemase from Streptococcus pneumoniae (strain ATCC BAA-255 / R6).